A 309-amino-acid polypeptide reads, in one-letter code: Integral membrane protein sed5 (309 aa).

Topologically, residues 1-288 are cytoplasmic; that stretch reads MSFQDRTAEF…KFYERMSSNR (288 aa). Positions 37 to 66 form a coiled coil; that stretch reads KHQKSEFTRIAQKIANQINQTGEKLQKLSQ. Residues 218–280 enclose the t-SNARE coiled-coil homology domain; it reads DTYSQQRMSS…GSAQREIVKF (63 aa). A helical; Anchor for type IV membrane protein transmembrane segment spans residues 289–308; the sequence is ALLFKIFGIVIIFFLLWVLV. Position 309 (Thr309) is a topological domain, vesicular.

The protein belongs to the syntaxin family.

It localises to the membrane. It is found in the golgi apparatus membrane. Required for vesicular transport between the endoplasmic reticulum and the Golgi complex. Acts as a target organelle soluble NSF attachment protein receptor (t-SNARE). This is Integral membrane protein sed5 (sed5) from Schizosaccharomyces pombe (strain 972 / ATCC 24843) (Fission yeast).